A 403-amino-acid polypeptide reads, in one-letter code: Sulfate adenylyltransferase (403 aa).

It belongs to the sulfate adenylyltransferase family.

It catalyses the reaction sulfate + ATP + H(+) = adenosine 5'-phosphosulfate + diphosphate. It participates in sulfur metabolism; hydrogen sulfide biosynthesis; sulfite from sulfate: step 1/3. The polypeptide is Sulfate adenylyltransferase (Pelodictyon phaeoclathratiforme (strain DSM 5477 / BU-1)).